Consider the following 224-residue polypeptide: Small ribosomal subunit protein uS3 (224 aa).

Positions 38-106 (IRKFISKKLK…QVHINIVEIK (69 aa)) constitute a KH type-2 domain.

This sequence belongs to the universal ribosomal protein uS3 family. Part of the 30S ribosomal subunit. Forms a tight complex with proteins S10 and S14.

Binds the lower part of the 30S subunit head. Binds mRNA in the 70S ribosome, positioning it for translation. This is Small ribosomal subunit protein uS3 from Lactobacillus helveticus (strain DPC 4571).